The sequence spans 166 residues: Small ribosomal subunit protein uS5 (166 aa).

Positions 12 to 75 (YIEKLVQVNR…EAARRNMIQV (64 aa)) constitute an S5 DRBM domain.

Belongs to the universal ribosomal protein uS5 family. Part of the 30S ribosomal subunit. Contacts proteins S4 and S8.

Its function is as follows. With S4 and S12 plays an important role in translational accuracy. In terms of biological role, located at the back of the 30S subunit body where it stabilizes the conformation of the head with respect to the body. The sequence is that of Small ribosomal subunit protein uS5 from Pseudomonas fluorescens (strain ATCC BAA-477 / NRRL B-23932 / Pf-5).